A 96-amino-acid polypeptide reads, in one-letter code: Progonadoliberin-1 (96 aa).

A signal peptide spans 1–26; the sequence is MHRKMAVKTLSVWLLLVGTLVPQHCC. Position 27 is a pyrrolidone carboxylic acid (Q27). G36 carries the glycine amide modification.

Belongs to the GnRH family. In terms of tissue distribution, preoptic area of the brain.

The protein localises to the secreted. Stimulates the secretion of gonadotropins. The sequence is that of Progonadoliberin-1 (gnrh1) from Verasper moseri (Barfin flounder).